The sequence spans 486 residues: Maintenance of mitochondrial morphology protein 1 (486 aa).

Topologically, residues 1–23 are lumenal; the sequence is MSQHSQYDAPGVPVQPSLSFTQG. The helical transmembrane segment at 24-44 threads the bilayer; sequence FLLGQLSVVLLIGAFIKFFIF. The Cytoplasmic portion of the chain corresponds to 45 to 486; that stretch reads GEAPAPPSRG…PGSMPGGRAQ (442 aa). The interval 52-103 is disordered; it reads SRGLASRTASHHRSYSINQGDNNVSNNNTSGGSPRTLCEKPSTSNVLRPVPS. Residues 67–84 are compositionally biased toward low complexity; the sequence is SINQGDNNVSNNNTSGGS. A compositionally biased stretch (polar residues) spans 92–103; the sequence is PSTSNVLRPVPS. Positions 140–389 constitute an SMP-LTD domain; the sequence is QPESLDWFNV…EPRVQVVGLP (250 aa). The span at 413 to 426 shows a compositional bias: low complexity; that stretch reads AAASASSRGGAPEA. The disordered stretch occupies residues 413-486; the sequence is AAASASSRGG…PGSMPGGRAQ (74 aa).

This sequence belongs to the MMM1 family. In terms of assembly, homodimer. Component of the ER-mitochondria encounter structure (ERMES) or MDM complex, composed of mmm1, mdm10, mdm12 and mdm34. A mmm1 homodimer associates with one molecule of mdm12 on each side in a pairwise head-to-tail manner, and the SMP-LTD domains of mmm1 and mdm12 generate a continuous hydrophobic tunnel for phospholipid trafficking.

The protein localises to the endoplasmic reticulum membrane. Its function is as follows. Component of the ERMES/MDM complex, which serves as a molecular tether to connect the endoplasmic reticulum (ER) and mitochondria. Components of this complex are involved in the control of mitochondrial shape and protein biogenesis, and function in nonvesicular lipid trafficking between the ER and mitochondria. The mdm12-mmm1 subcomplex functions in the major beta-barrel assembly pathway that is responsible for biogenesis of all outer membrane beta-barrel proteins, and acts in a late step after the SAM complex. The mdm10-mdm12-mmm1 subcomplex further acts in the TOM40-specific pathway after the action of the mdm12-mmm1 complex. Essential for establishing and maintaining the structure of mitochondria and maintenance of mtDNA nucleoids. The protein is Maintenance of mitochondrial morphology protein 1 of Talaromyces marneffei (strain ATCC 18224 / CBS 334.59 / QM 7333) (Penicillium marneffei).